The chain runs to 266 residues: Histidinol-phosphatase (266 aa).

E69, D84, I86, and D87 together coordinate Mg(2+). A substrate-binding site is contributed by E69. Substrate-binding positions include 86–89 (IDGT), R190, and D218. Residue D218 participates in Mg(2+) binding.

The protein belongs to the inositol monophosphatase superfamily. Mg(2+) is required as a cofactor.

It catalyses the reaction L-histidinol phosphate + H2O = L-histidinol + phosphate. The protein operates within amino-acid biosynthesis; L-histidine biosynthesis; L-histidine from 5-phospho-alpha-D-ribose 1-diphosphate: step 8/9. In terms of biological role, catalyzes the dephosphorylation of histidinol-phosphate to histidinol, the direct precursor of histidine. The polypeptide is Histidinol-phosphatase (Streptomyces coelicolor (strain ATCC BAA-471 / A3(2) / M145)).